Reading from the N-terminus, the 321-residue chain is Glucokinase (321 aa).

8 to 13 (GDVGGT) is a binding site for ATP.

This sequence belongs to the bacterial glucokinase family.

The protein resides in the cytoplasm. The catalysed reaction is D-glucose + ATP = D-glucose 6-phosphate + ADP + H(+). Functionally, not highly important in E.coli as glucose is transported into the cell by the PTS system already as glucose 6-phosphate. The polypeptide is Glucokinase (Escherichia coli O139:H28 (strain E24377A / ETEC)).